The chain runs to 53 residues: Conotoxin-like peptide 1 (53 aa).

The signal sequence occupies residues 1–18 (MGVKSALFIMAVFAAANV). 3 disulfide bridges follow: Cys-25–Cys-39, Cys-32–Cys-43, and Cys-38–Cys-50.

Its subcellular location is the secreted. This Orgyia pseudotsugata multicapsid polyhedrosis virus (OpMNPV) protein is Conotoxin-like peptide 1 (CTL-1).